A 1358-amino-acid chain; its full sequence is DNA-directed RNA polymerase subunit beta (1358 aa).

This sequence belongs to the RNA polymerase beta chain family. The RNAP catalytic core consists of 2 alpha, 1 beta, 1 beta' and 1 omega subunit. When a sigma factor is associated with the core the holoenzyme is formed, which can initiate transcription.

It catalyses the reaction RNA(n) + a ribonucleoside 5'-triphosphate = RNA(n+1) + diphosphate. DNA-dependent RNA polymerase catalyzes the transcription of DNA into RNA using the four ribonucleoside triphosphates as substrates. This is DNA-directed RNA polymerase subunit beta from Francisella tularensis subsp. holarctica (strain LVS).